The primary structure comprises 125 residues: Large ribosomal subunit protein bL12 (125 aa).

It belongs to the bacterial ribosomal protein bL12 family. In terms of assembly, homodimer. Part of the ribosomal stalk of the 50S ribosomal subunit. Forms a multimeric L10(L12)X complex, where L10 forms an elongated spine to which 2 to 4 L12 dimers bind in a sequential fashion. Binds GTP-bound translation factors.

Forms part of the ribosomal stalk which helps the ribosome interact with GTP-bound translation factors. Is thus essential for accurate translation. This Bradyrhizobium sp. (strain BTAi1 / ATCC BAA-1182) protein is Large ribosomal subunit protein bL12.